The chain runs to 133 residues: Large ribosomal subunit protein uL15 (133 aa).

The segment at 1–64 (MGLENLKPAK…QPLQRRLPKI (64 aa)) is disordered.

Belongs to the universal ribosomal protein uL15 family. Part of the 50S ribosomal subunit.

In terms of biological role, binds to the 23S rRNA. This is Large ribosomal subunit protein uL15 from Helicobacter pylori (strain J99 / ATCC 700824) (Campylobacter pylori J99).